Consider the following 609-residue polypeptide: Aspartate--tRNA(Asp/Asn) ligase (609 aa).

L-aspartate is bound at residue Glu175. Residues 199–202 (QQFK) form an aspartate region. Residues Arg221 and His468 each coordinate L-aspartate. Residue 221–223 (RDE) coordinates ATP. Glu502 is a binding site for ATP. Arg509 serves as a coordination point for L-aspartate. 554 to 557 (GIDR) lines the ATP pocket.

Belongs to the class-II aminoacyl-tRNA synthetase family. Type 1 subfamily. Homodimer.

It localises to the cytoplasm. The enzyme catalyses tRNA(Asx) + L-aspartate + ATP = L-aspartyl-tRNA(Asx) + AMP + diphosphate. In terms of biological role, aspartyl-tRNA synthetase with relaxed tRNA specificity since it is able to aspartylate not only its cognate tRNA(Asp) but also tRNA(Asn). Reaction proceeds in two steps: L-aspartate is first activated by ATP to form Asp-AMP and then transferred to the acceptor end of tRNA(Asp/Asn). The protein is Aspartate--tRNA(Asp/Asn) ligase of Caulobacter sp. (strain K31).